The primary structure comprises 351 residues: tRNA-specific 2-thiouridylase MnmA 2 (351 aa).

ATP-binding positions include 13 to 20 (GMSGGTDS) and F39. C98 functions as the Nucleophile in the catalytic mechanism. C98 and C195 are oxidised to a cystine. G122 contributes to the ATP binding site. An interaction with tRNA region spans residues 144–146 (KDQ). Catalysis depends on C195, which acts as the Cysteine persulfide intermediate. Residues 301 to 302 (RY) form an interaction with tRNA region.

The protein belongs to the MnmA/TRMU family.

The protein localises to the cytoplasm. The catalysed reaction is S-sulfanyl-L-cysteinyl-[protein] + uridine(34) in tRNA + AH2 + ATP = 2-thiouridine(34) in tRNA + L-cysteinyl-[protein] + A + AMP + diphosphate + H(+). In terms of biological role, catalyzes the 2-thiolation of uridine at the wobble position (U34) of tRNA, leading to the formation of s(2)U34. In Phocaeicola vulgatus (strain ATCC 8482 / DSM 1447 / JCM 5826 / CCUG 4940 / NBRC 14291 / NCTC 11154) (Bacteroides vulgatus), this protein is tRNA-specific 2-thiouridylase MnmA 2.